Here is an 871-residue protein sequence, read N- to C-terminus: DNA mismatch repair protein MutS (871 aa).

Residue 630–637 (GPNMGGKS) coordinates ATP. Residues 830 to 849 (KEEPESKSASPVEAALAGIN) form a disordered region.

This sequence belongs to the DNA mismatch repair MutS family.

This protein is involved in the repair of mismatches in DNA. It is possible that it carries out the mismatch recognition step. This protein has a weak ATPase activity. The chain is DNA mismatch repair protein MutS from Verminephrobacter eiseniae (strain EF01-2).